Reading from the N-terminus, the 544-residue chain is Chaperonin GroEL 1 (544 aa).

Residues 30–33 (TLGP), 87–91 (DGTTT), Gly-415, 480–482 (NAA), and Asp-496 contribute to the ATP site.

This sequence belongs to the chaperonin (HSP60) family. Forms a cylinder of 14 subunits composed of two heptameric rings stacked back-to-back. Interacts with the co-chaperonin GroES.

Its subcellular location is the cytoplasm. It catalyses the reaction ATP + H2O + a folded polypeptide = ADP + phosphate + an unfolded polypeptide.. Together with its co-chaperonin GroES, plays an essential role in assisting protein folding. The GroEL-GroES system forms a nano-cage that allows encapsulation of the non-native substrate proteins and provides a physical environment optimized to promote and accelerate protein folding. This Polaromonas naphthalenivorans (strain CJ2) protein is Chaperonin GroEL 1.